Reading from the N-terminus, the 1001-residue chain is Ulvan lyase, long isoform (1001 aa).

Positions 1–21 are cleaved as a signal peptide; sequence MNGLKMLLFSTTLLTAFTLHA. Position 126-127 (126-127) interacts with substrate; the sequence is SH. His-127 acts as the Proton donor/acceptor in catalysis. Ca(2+) contacts are provided by Asp-189, Asp-199, and Lys-201. Positions 280 and 297 each coordinate substrate. Ca(2+) contacts are provided by Asp-300, Asp-303, and Tyr-305. Substrate is bound at residue Tyr-361.

The protein belongs to the polysaccharide lyase 24 family.

Its function is as follows. Ulvan lyase involved in ulvan degradation. Ulvan is the main polysaccharide component of the Ulvales (green seaweed) cell wall. It is composed of disaccharide building blocks comprising 3-sulfated rhamnose (Rha3S) linked to D-glucuronic acid (GlcA), L-iduronic acid (IduA), or D-xylose (Xyl). Ulvan lyase catalyzes preferentially the endolytic cleavage of the glycosidic bond between Rha3S and the uronic acid GlcA, but not IduA, producing oligosaccharides that have unsaturated 4-deoxy-L-threo-hex-4-enopyranosiduronic acid (deltaUA) at the non-reducing end. The most abundant end products in the degradation of the ulvan polysaccharide were deltaUA-Rha3S disaccharides and deltaUA-Rha3S-IduA-Rha3S and deltaUA-Rha3S-Xyl-Rha3S tetrasaccharides. The sequence is that of Ulvan lyase, long isoform from Pseudoalteromonas sp. (strain PLSV).